Consider the following 254-residue polypeptide: Probable phosphatase Shew185_1467 (254 aa).

Zn(2+)-binding residues include H8, H10, H16, H41, E74, H102, H132, D193, and H195.

It belongs to the PHP family. It depends on Zn(2+) as a cofactor.

The protein is Probable phosphatase Shew185_1467 of Shewanella baltica (strain OS185).